A 421-amino-acid chain; its full sequence is Putative aspartate aminotransferase, cytoplasmic 2 (421 aa).

Lys249 carries the N6-(pyridoxal phosphate)lysine modification.

It belongs to the class-I pyridoxal-phosphate-dependent aminotransferase family. As to quaternary structure, homodimer. The cofactor is pyridoxal 5'-phosphate.

The protein localises to the cytoplasm. The enzyme catalyses L-aspartate + 2-oxoglutarate = oxaloacetate + L-glutamate. The chain is Putative aspartate aminotransferase, cytoplasmic 2 (GOT1L1) from Homo sapiens (Human).